The chain runs to 622 residues: Iron transport multicopper oxidase FET5 (622 aa).

The N-terminal stretch at 1-18 (MLFYSFVWSVLAASVALA) is a signal peptide. Topologically, residues 19–573 (KTHKLNYTAS…PKGFTTEGYL (555 aa)) are extracellular. Asn-24 is a glycosylation site (N-linked (GlcNAc...) asparagine). Plastocyanin-like domains follow at residues 43–146 (IGFN…FIIH) and 192–301 (NILF…IQMR). Cu cation contacts are provided by His-79 and His-81. Residues Asn-86 and Asn-115 are each glycosylated (N-linked (GlcNAc...) asparagine). Residues His-128 and His-130 each coordinate Cu cation. 5 N-linked (GlcNAc...) asparagine glycosylation sites follow: Asn-196, Asn-200, Asn-246, Asn-295, and Asn-364. The 123-residue stretch at 392 to 514 (GDNINAQLLK…QGLASVFIEA (123 aa)) folds into the Plastocyanin-like 3 domain. Cu cation is bound by residues His-418, His-421, and His-423. Asn-455 is a glycosylation site (N-linked (GlcNAc...) asparagine). Cu cation-binding residues include His-496, Cys-497, His-498, and His-502. The chain crosses the membrane as a helical span at residues 574-594 (ALIISTIIGVWGLYSIAQYGI). Topologically, residues 595-622 (GEVIPNDEKVYHTLREILAENEIEVSRG) are cytoplasmic.

This sequence belongs to the multicopper oxidase family. Interacts with FTH1. Cu cation is required as a cofactor.

The protein localises to the cell membrane. Functionally, iron transport multicopper oxidase, which is required for Fe(2+) high affinity uptake. May be required to oxidize Fe(2+) and release it from the transporter. Essential component of copper-dependent iron transport. The protein is Iron transport multicopper oxidase FET5 (FET5) of Saccharomyces cerevisiae (strain ATCC 204508 / S288c) (Baker's yeast).